Here is a 392-residue protein sequence, read N- to C-terminus: Phosphoglycerate kinase (392 aa).

Residues 21–23 (DFN), arginine 36, 59–62 (HLGR), arginine 117, and arginine 150 each bind substrate. ATP-binding positions include lysine 200, glycine 288, glutamate 319, and 345–348 (GGDS).

This sequence belongs to the phosphoglycerate kinase family. In terms of assembly, monomer.

The protein resides in the cytoplasm. The catalysed reaction is (2R)-3-phosphoglycerate + ATP = (2R)-3-phospho-glyceroyl phosphate + ADP. Its pathway is carbohydrate degradation; glycolysis; pyruvate from D-glyceraldehyde 3-phosphate: step 2/5. In Rubrobacter xylanophilus (strain DSM 9941 / JCM 11954 / NBRC 16129 / PRD-1), this protein is Phosphoglycerate kinase.